We begin with the raw amino-acid sequence, 568 residues long: 4-hydroxy-7-methoxy-3-oxo-3,4-dihydro-2H-1,4-benzoxazin-2-yl glucoside beta-D-glucosidase, chloroplastic (568 aa).

The transit peptide at 1-50 (MALLVGGTLNPTTHLSLRSRAGRNSENVWLRSAASSQTSKGRFCNLTVRA) directs the protein to the chloroplast. A beta-D-glucoside contacts are provided by residues glutamine 92, histidine 194, and 239–240 (NE). Glutamate 240 acts as the Proton donor in catalysis. Cysteines 259 and 265 form a disulfide. Residues tyrosine 383, glutamate 456, tryptophan 504, 511 to 512 (EW), and phenylalanine 520 each bind a beta-D-glucoside. Catalysis depends on glutamate 456, which acts as the Nucleophile.

It belongs to the glycosyl hydrolase 1 family. In terms of assembly, homohexamer. In terms of tissue distribution, expressed in seedlings, mesocotyl, coleoptile, leaf sheath, and roots.

The protein resides in the plastid. Its subcellular location is the chloroplast. The catalysed reaction is DIMBOA beta-D-glucoside + H2O = DIMBOA + D-glucose. It catalyses the reaction DIBOA beta-D-glucoside + H2O = DIBOA + D-glucose. The enzyme catalyses Hydrolysis of terminal, non-reducing beta-D-glucosyl residues with release of beta-D-glucose.. With respect to regulation, inhibited by castanospermine, Ag(+) and Cu(2+). 34% inhibition by Zn(2+) and not affected by EDTA. Its function is as follows. Involved in defense of young plant parts against pests via the production of benzoxazolinones (hydroxamic acids) from hydroxamic acid glucosides. The preferred substrate is DIBOA-beta-D-glucoside. Can also use esculin and genistein glucoside as substrates, but no activity with salicin, p-nitrophenyl-alpha-glucoside or substrates related to cell wall components. In Secale cereale (Rye), this protein is 4-hydroxy-7-methoxy-3-oxo-3,4-dihydro-2H-1,4-benzoxazin-2-yl glucoside beta-D-glucosidase, chloroplastic.